Consider the following 693-residue polypeptide: Serine/threonine-protein kinase Pkn1 (693 aa).

The Protein kinase domain maps to 59–328 (FRLVRRLGRG…QVALAEHVRV (270 aa)). ATP is bound by residues 65–73 (LGRGGMGAV) and Lys88. Residue Asp180 is the Proton acceptor of the active site. Positions 393–491 (LVEVPVQVVL…LKAAVDALLQ (99 aa)) constitute a PilZ domain. One copy of the TPR repeat lies at 630–663 (ARSHFQSGGALERDGQLSQALDQYERGLKLAPLE).

It belongs to the protein kinase superfamily. Ser/Thr protein kinase family. Autophosphorylated.

It carries out the reaction L-seryl-[protein] + ATP = O-phospho-L-seryl-[protein] + ADP + H(+). It catalyses the reaction L-threonyl-[protein] + ATP = O-phospho-L-threonyl-[protein] + ADP + H(+). May be regulated by calcium or a calmodulin-like protein. In terms of biological role, plays an essential role in proper timing of early development events. This is Serine/threonine-protein kinase Pkn1 (pkn1) from Myxococcus xanthus.